A 76-amino-acid chain; its full sequence is MLILSRKEEESIVIGDEIVIKVVSIDKGSVKLGFEAPPHMLILREELKKAVADENLKASAQSDEIALTSLSQKLKK.

This sequence belongs to the CsrA/RsmA family. As to quaternary structure, homodimer; the beta-strands of each monomer intercalate to form a hydrophobic core, while the alpha-helices form wings that extend away from the core.

Its subcellular location is the cytoplasm. A translational regulator that binds mRNA to regulate translation initiation and/or mRNA stability. Usually binds in the 5'-UTR at or near the Shine-Dalgarno sequence preventing ribosome-binding, thus repressing translation. Its main target seems to be the major flagellin gene, while its function is anatagonized by FliW. The polypeptide is Translational regulator CsrA (Wolinella succinogenes (strain ATCC 29543 / DSM 1740 / CCUG 13145 / JCM 31913 / LMG 7466 / NCTC 11488 / FDC 602W) (Vibrio succinogenes)).